The sequence spans 116 residues: Small ribosomal subunit protein uS13m (116 aa).

This sequence belongs to the universal ribosomal protein uS13 family. Part of the small ribosomal subunit.

It localises to the mitochondrion. Functionally, located at the top of the head of the small subunit, it contacts several helices of the 18S rRNA. This Daucus carota (Wild carrot) protein is Small ribosomal subunit protein uS13m (RPS13).